A 476-amino-acid chain; its full sequence is Endonuclease SceI small subunit (476 aa).

Belongs to the LAGLIDADG endonuclease family. As to quaternary structure, endonuclease SceI (Endo.SceI) is a heterodimer of ENS2 and SSC1. The N-terminus is blocked.

The protein localises to the mitochondrion. Catalytic component of endonuclease SceI (Endo.SceI), which cleaves specifically at multiple sites on mitochondrial DNA and produces double-stranded breaks. This Saccharomyces cerevisiae (Baker's yeast) protein is Endonuclease SceI small subunit (ENS2).